Reading from the N-terminus, the 193-residue chain is Non-specific lipid transfer protein GPI-anchored 1 (193 aa).

An N-terminal signal peptide occupies residues 1-22; sequence MKGLHLHLVLVTMTIVASIAAA. 4 disulfide bridges follow: C35–C76, C45–C60, C61–C106, and C74–C116. N-linked (GlcNAc...) asparagine glycosylation is found at N110 and N135. The disordered stretch occupies residues 138-161; sequence TTPVAPAGKSPATPATSTDKGGSA. D165 carries the GPI-anchor amidated aspartate lipid modification. A propeptide spans 166–193 (removed in mature form); sequence GHAVVALAVALMAVSFVLTLPRHVTLGM.

It belongs to the plant LTP family. O-glycosylated on hydroxyprolines; noncontiguous hydroxylproline residues are glycosylated with arabinogalactan. Up-regulated in the epidermis of stems and leaves. Expressed in the epidermis, stem cortex, vascular bundles and mesophyll cells in root tips, cotyledons, seedlings, leaves, caulines, flowers, siliques, pollen, and early-developing seeds.

The protein resides in the cell membrane. The protein localises to the secreted. Its subcellular location is the cell wall. It is found in the endoplasmic reticulum. It localises to the golgi apparatus. Lipid transfer protein that, together with LTPG2, binds to lipids and functions as a component of the cuticular lipid export machinery that performs extensive export of intracellular lipids (e.g. C29 alkane) from epidermal cells to the surface to build the cuticular wax layer and silique walls. Involved in the establishment of resistance to the necrotrophic fungal pathogen Alternaria brassicicola. Contributes to pre-invasive defense against some non-host powdery mildew pathogens by preventing the penetration of the epidermal cell wall by the fungal agents (e.g. Blumeria graminis f. sp. hordei (Bgh)). Maybe involved in seed and ovule maturation and development, probably by regulating the fatty acids homeostasis during suberin and sporopollenin biosynthesis or deposition. The chain is Non-specific lipid transfer protein GPI-anchored 1 from Arabidopsis thaliana (Mouse-ear cress).